Here is a 376-residue protein sequence, read N- to C-terminus: Aminomethyltransferase (376 aa).

Belongs to the GcvT family. The glycine cleavage system is composed of four proteins: P, T, L and H.

It catalyses the reaction N(6)-[(R)-S(8)-aminomethyldihydrolipoyl]-L-lysyl-[protein] + (6S)-5,6,7,8-tetrahydrofolate = N(6)-[(R)-dihydrolipoyl]-L-lysyl-[protein] + (6R)-5,10-methylene-5,6,7,8-tetrahydrofolate + NH4(+). The glycine cleavage system catalyzes the degradation of glycine. This Nostoc sp. (strain PCC 7120 / SAG 25.82 / UTEX 2576) protein is Aminomethyltransferase.